The sequence spans 616 residues: Sulfite reductase [NADPH] hemoprotein beta-component (616 aa).

Basic and acidic residues predominate over residues 1–10 (MDDHSPRDAA). Positions 1 to 35 (MDDHSPRDAAETPAPGPAATPAKRVYETPPTSRPI) are disordered. Over residues 11 to 22 (ETPAPGPAATPA) the composition is skewed to low complexity. Residues C470, C476, C515, and C519 each contribute to the [4Fe-4S] cluster site. Position 519 (C519) interacts with siroheme.

It belongs to the nitrite and sulfite reductase 4Fe-4S domain family. In terms of assembly, alpha(8)-beta(8). The alpha component is a flavoprotein, the beta component is a hemoprotein. Siroheme is required as a cofactor. The cofactor is [4Fe-4S] cluster.

It carries out the reaction hydrogen sulfide + 3 NADP(+) + 3 H2O = sulfite + 3 NADPH + 4 H(+). It functions in the pathway sulfur metabolism; hydrogen sulfide biosynthesis; hydrogen sulfide from sulfite (NADPH route): step 1/1. Component of the sulfite reductase complex that catalyzes the 6-electron reduction of sulfite to sulfide. This is one of several activities required for the biosynthesis of L-cysteine from sulfate. This chain is Sulfite reductase [NADPH] hemoprotein beta-component, found in Methylobacterium radiotolerans (strain ATCC 27329 / DSM 1819 / JCM 2831 / NBRC 15690 / NCIMB 10815 / 0-1).